We begin with the raw amino-acid sequence, 209 residues long: Pyroglutamyl-peptidase 1 (209 aa).

Catalysis depends on residues E85, C149, and H168.

The protein belongs to the peptidase C15 family. As to quaternary structure, monomer.

Its subcellular location is the cytoplasm. It catalyses the reaction Release of an N-terminal pyroglutamyl group from a polypeptide, the second amino acid generally not being Pro.. In terms of biological role, removes 5-oxoproline from various penultimate amino acid residues except L-proline. The chain is Pyroglutamyl-peptidase 1 (Pgpep1) from Rattus norvegicus (Rat).